A 354-amino-acid polypeptide reads, in one-letter code: Alkanal monooxygenase alpha chain (354 aa).

This sequence belongs to the bacterial luciferase oxidoreductase family. As to quaternary structure, heterodimer of an alpha and a beta chain.

It carries out the reaction a long-chain fatty aldehyde + FMNH2 + O2 = a long-chain fatty acid + hnu + FMN + H2O + 2 H(+). Light-emitting reaction in luminous bacteria. The sequence is that of Alkanal monooxygenase alpha chain (luxA) from Photobacterium leiognathi.